The following is a 525-amino-acid chain: MVPLRLVLLLHIIHFSCENEVGSAANNGSAQLYNYRKIHLPDDHIPYYLHSNRHVAALCLQDLHCPYKQHLQNLNSCWGYEKTCAEGHRFGYPVCDQVDFGWAKTIEESQQVFWRQADFGYVKERLAETQILCRPQEQGDSMLACSQNLQHCRATNLYLDLRHPRRGQENFKEDFLQEGEIGGHCDLDKQALLSQGAWKSPLQSWFAELQSYSSFKFKPIEDAHCDIIIEKPTYFMKLDAGVNMYHHFCDFVNLYITQHVNNSFSTDINIVMWTTSVYGYGDLFSDTWKAFTDYEITHLKAYDNKRVCFKDAVFALLPRMRYGLFYNTPLISHCHGSGLFRAFSQHVLHRLNITQHPATEAKIRVTILVRSTEFRKILNLDELVQALEAVPTFQVKVVDYKYRVLGFLEQLSITHNSDIFIGMHGAGLTHLLFLPDWAVVFELYNCEDARCYLDLARLRGIQYMTWEKGDKVFPQDKGHHPNLGEHPKFTNYAFDVEEFLRLVQQGATYVSRHSKWPLRRTRDEL.

Residues 1–24 (MVPLRLVLLLHIIHFSCENEVGSA) form the signal peptide. The Required for optimal activity signature appears at 293–295 (DYE). Residue Asn-352 is glycosylated (N-linked (GlcNAc...) asparagine). The Prevents secretion from ER motif lies at 522–525 (RDEL).

It belongs to the glycosyltransferase 61 family.

Its subcellular location is the endoplasmic reticulum lumen. The catalysed reaction is L-seryl-[protein] + UDP-N-acetyl-alpha-D-glucosamine = 3-O-(N-acetyl-beta-D-glucosaminyl)-L-seryl-[protein] + UDP + H(+). It carries out the reaction L-threonyl-[protein] + UDP-N-acetyl-alpha-D-glucosamine = 3-O-(N-acetyl-beta-D-glucosaminyl)-L-threonyl-[protein] + UDP + H(+). Functionally, catalyzes the transfer of a single N-acetylglucosamine from UDP-GlcNAc to a serine or threonine residue in extracellular proteins resulting in their modification with a beta-linked N-acetylglucosamine (O-GlcNAc). Specifically glycosylates the Thr residue located between the fifth and sixth conserved cysteines of folded EGF-like domains. This is EGF domain-specific O-linked N-acetylglucosamine transferase (eogt) from Xenopus laevis (African clawed frog).